A 185-amino-acid chain; its full sequence is Phospholipase A2 inhibitor 25 kDa subunit (185 aa).

8 disulfide bridges follow: Cys3–Cys27, Cys6–Cys13, Cys20–Cys48, Cys54–Cys75, Cys76–Cys81, Cys101–Cys126, Cys119–Cys146, and Cys152–Cys172.

Belongs to the CNF-like-inhibitor family. Heterodimer with phospholipase A2 inhibitor 31 kDa. In terms of tissue distribution, expressed by the liver.

The protein resides in the secreted. Inhibits the enzymatic activity of phospholipase A2. This Naja kaouthia (Monocled cobra) protein is Phospholipase A2 inhibitor 25 kDa subunit.